Here is a 398-residue protein sequence, read N- to C-terminus: Dual-specificity RNA methyltransferase RlmN (398 aa).

Glu-119 functions as the Proton acceptor in the catalytic mechanism. A Radical SAM core domain is found at 125-364; it reads EADRATLCVS…TIVRKTRGDD (240 aa). Residues Cys-132 and Cys-369 are joined by a disulfide bond. [4Fe-4S] cluster is bound by residues Cys-139, Cys-143, and Cys-146. S-adenosyl-L-methionine-binding positions include 193 to 194, Ser-225, 247 to 249, and Asn-326; these read GE and SLH. Residue Cys-369 is the S-methylcysteine intermediate of the active site.

The protein belongs to the radical SAM superfamily. RlmN family. [4Fe-4S] cluster is required as a cofactor.

The protein resides in the cytoplasm. The enzyme catalyses adenosine(2503) in 23S rRNA + 2 reduced [2Fe-2S]-[ferredoxin] + 2 S-adenosyl-L-methionine = 2-methyladenosine(2503) in 23S rRNA + 5'-deoxyadenosine + L-methionine + 2 oxidized [2Fe-2S]-[ferredoxin] + S-adenosyl-L-homocysteine. It catalyses the reaction adenosine(37) in tRNA + 2 reduced [2Fe-2S]-[ferredoxin] + 2 S-adenosyl-L-methionine = 2-methyladenosine(37) in tRNA + 5'-deoxyadenosine + L-methionine + 2 oxidized [2Fe-2S]-[ferredoxin] + S-adenosyl-L-homocysteine. Functionally, specifically methylates position 2 of adenine 2503 in 23S rRNA and position 2 of adenine 37 in tRNAs. m2A2503 modification seems to play a crucial role in the proofreading step occurring at the peptidyl transferase center and thus would serve to optimize ribosomal fidelity. This is Dual-specificity RNA methyltransferase RlmN from Yersinia pseudotuberculosis serotype O:3 (strain YPIII).